The following is a 142-amino-acid chain: Large ribosomal subunit protein uL13 (142 aa).

It belongs to the universal ribosomal protein uL13 family. As to quaternary structure, part of the 50S ribosomal subunit.

Its function is as follows. This protein is one of the early assembly proteins of the 50S ribosomal subunit, although it is not seen to bind rRNA by itself. It is important during the early stages of 50S assembly. The sequence is that of Large ribosomal subunit protein uL13 from Polaromonas sp. (strain JS666 / ATCC BAA-500).